Here is a 260-residue protein sequence, read N- to C-terminus: HTH-type transcriptional repressor NanR (260 aa).

The HTH gntR-type domain occupies 27–95; it reads KKLSDMVEEE…NGERARVSMP (69 aa). The H-T-H motif DNA-binding region spans 55-74; sequence ERELMEFFNVGRPSVREALA.

Belongs to the NanR family.

Transcriptional repressor that controls expression of the genes required for the catabolism of sialic acids. The protein is HTH-type transcriptional repressor NanR of Enterobacter sp. (strain 638).